Reading from the N-terminus, the 79-residue chain is DCAKEGEVCSWGKKCCDLDNFYCPMEFIPHCKKYKPYVPVTTNCAKEGEVCGWGSKCCHGLDCPLAFIPYCEKYRGRND.

Disulfide bonds link Cys2-Cys16, Cys9-Cys23, Cys15-Cys31, Cys44-Cys58, Cys51-Cys63, and Cys57-Cys71. 2 Domain repeats span residues 2 to 31 and 42 to 71; these read CAKE…IPHC and TNCA…IPYC. The interval 2–71 is 2 X approximate repeats with cysteine pattern C-C-CC-C-C; it reads CAKEGEVCSW…DCPLAFIPYC (70 aa).

Belongs to the neurotoxin 23 family. Double-knot toxin subfamily. Interacts with TRPV1 (2 toxins (4 moieties) bind 1 channel (homotetramer)). In terms of tissue distribution, expressed by the venom gland.

The protein resides in the secreted. Functionally, selectively activates the heat-activated TRPV1 channel. It binds to TRPV1 in an open state-dependent manner, trapping it there to produce irreversible currents. It binds to the outer edge of the external pore of TRPV1 in a counterclockwise configuration, using a limited protein-protein interface and inserting hydrophobic residues into the bilayer. It also partitions naturally into membranes, with the two lobes exhibiting opposing energetics for membrane partitioning (K1) and channel activation (K2). In addition, the toxin disrupts a cluster of hydrophobic residues behind the selectivity filter that are critical for channel activation. In Cyriopagopus schmidti (Chinese bird spider), this protein is Tau-theraphotoxin-Hs1a.